The primary structure comprises 136 residues: Non-structural protein 1 (136 aa).

Belongs to the pneumovirus non-structural protein 1 family. Monomer. Homomultimer. Heteromultimer with NS2. Interacts with the matrix protein M. Interacts with host ELOC and CUL2; this interaction allows NS1 to form an active E3 ligase with ELOC and CUL2. Interacts with host IRF3; this interaction leads to the disrupted association of IRF3 with CREBBP and thus reduced binding of IRF3 to the IFN-beta promoter. Interacts with host MAVS; this interaction prevents MAVS binding to RIGI and inhibits signaling pathway leading to interferon production. Interacts with host TRIM25 (via SPRY domain); this interaction suppresses RIGI ubiquitination and results in decreased interaction between RIGI and MAVS.

The protein resides in the host cytoplasm. It is found in the host mitochondrion. It localises to the host nucleus. Plays a major role in antagonizing the type I IFN-mediated antiviral response by degrading or inhibiting multiple cellular factors required for either IFN induction or response pathways. Acts cooperatively with NS2 to repress activation and nuclear translocation of host IFN-regulatory factor IRF3. Also disrupts the association of IRF3 with CREBBP. Interacts with host mitochondrial-associated membrane (MAM) MAVS and prevents the interaction with RIGI. Interacts with TRIM25 to suppress TRIM25-mediated RIGI ubiquitination and thereby RIGI-MAVS interaction. Together with NS2, participates in the proteasomal degradation of host STAT2, IRF3, IRF7, TBK1 and RIGI through a NS-degradasome involving CUL2 and Elongin-C. The degradasome requires an intact mitochondrial MAVS. Decreases the levels of host TRAF3 and IKBKE/IKK-epsilon. As functions other than disruptions of the type I IFN-mediated antiviral signaling pathways, induces host SOCS1 and SOCS3 expression. Suppresses premature apoptosis by an NF-kappa-B-dependent, interferon-independent mechanism and thus facilitates virus growth. Additionally, NS1 may serve some inhibitory role in viral transcription and RNA replication. Suppresses proliferation and activation of host CD103+ CD8+ cytotoxic T-lymphocytes and Th17 helper T-lymphocytes. The polypeptide is Non-structural protein 1 (1C) (Ovis aries (Sheep)).